A 207-amino-acid chain; its full sequence is Large ribosomal subunit protein bL25 (207 aa).

This sequence belongs to the bacterial ribosomal protein bL25 family. CTC subfamily. In terms of assembly, part of the 50S ribosomal subunit; part of the 5S rRNA/L5/L18/L25 subcomplex. Contacts the 5S rRNA. Binds to the 5S rRNA independently of L5 and L18.

Functionally, this is one of the proteins that binds to the 5S RNA in the ribosome where it forms part of the central protuberance. The sequence is that of Large ribosomal subunit protein bL25 from Paraburkholderia xenovorans (strain LB400).